Here is a 444-residue protein sequence, read N- to C-terminus: N-succinylarginine dihydrolase (444 aa).

Residues 19-28, Asn110, and 137-138 each bind substrate; these read AGLSFGNVAS and HR. Glu174 is a catalytic residue. Arg214 is a substrate binding site. Residue His250 is part of the active site. Substrate-binding residues include Asp252 and Asn362. Cys368 serves as the catalytic Nucleophile.

Belongs to the succinylarginine dihydrolase family. Homodimer.

The enzyme catalyses N(2)-succinyl-L-arginine + 2 H2O + 2 H(+) = N(2)-succinyl-L-ornithine + 2 NH4(+) + CO2. It participates in amino-acid degradation; L-arginine degradation via AST pathway; L-glutamate and succinate from L-arginine: step 2/5. Catalyzes the hydrolysis of N(2)-succinylarginine into N(2)-succinylornithine, ammonia and CO(2). In Shewanella baltica (strain OS223), this protein is N-succinylarginine dihydrolase.